An 89-amino-acid polypeptide reads, in one-letter code: MANHKSAEKRIRQTIKRTERNRFYKTKIKNIIKAVREAVAVNDVEKAQERLKIANKELHKFVSKGILKKNTASRKVSRLNASVKKIALA.

This sequence belongs to the bacterial ribosomal protein bS20 family.

Binds directly to 16S ribosomal RNA. This chain is Small ribosomal subunit protein bS20, found in Helicobacter acinonychis (strain Sheeba).